The following is a 569-amino-acid chain: Amyloid-beta A4 precursor protein-binding family A member 3 (569 aa).

M1 bears the N-acetylmethionine mark. Disordered stretches follow at residues 1–53 and 124–168; these read MEFL…MELD and AQSV…SSPE. The span at 19–32 shows a compositional bias: basic and acidic residues; it reads EEPKGPEVPSEDHP. The segment covering 132 to 141 has biased composition (low complexity); it reads AQAAPRLLQP. Phosphoserine is present on residues S166 and S367. Positions 212–376 constitute a PID domain; that stretch reads DGVLFGAKYL…SASASHPHNG (165 aa). PDZ domains follow at residues 389-475 and 480-554; these read EVCI…IIHC and TAVI…TMPA.

Binds to the cytoplasmic domain of amyloid protein (APP). Interacts with HIF1AN (via N-terminus). Interacts with NECAB3; seems to mediate the interaction between NECAB3 and HIF1AN. As to expression, ubiquitous.

The protein localises to the cytoplasm. The protein resides in the perinuclear region. Functionally, may modulate processing of the amyloid-beta precursor protein (APP) and hence formation of APP-beta. May enhance the activity of HIF1A in macrophages by inhibiting the activity of HIF1AN. The chain is Amyloid-beta A4 precursor protein-binding family A member 3 (Apba3) from Rattus norvegicus (Rat).